Here is a 211-residue protein sequence, read N- to C-terminus: Small ribosomal subunit protein uS3 (211 aa).

One can recognise a KH type-2 domain in the interval 38-106 (LRKFIKKAFY…NIELNIIEVK (69 aa)).

Belongs to the universal ribosomal protein uS3 family. Part of the 30S ribosomal subunit. Forms a tight complex with proteins S10 and S14.

Binds the lower part of the 30S subunit head. Binds mRNA in the 70S ribosome, positioning it for translation. The polypeptide is Small ribosomal subunit protein uS3 (Ehrlichia canis (strain Jake)).